Reading from the N-terminus, the 168-residue chain is Acetolactate synthase small subunit (168 aa).

The 76-residue stretch at 7–82 folds into the ACT domain; the sequence is TLSVLVEDKP…VIKIVEQDDE (76 aa).

Belongs to the acetolactate synthase small subunit family. As to quaternary structure, dimer of large and small chains.

It carries out the reaction 2 pyruvate + H(+) = (2S)-2-acetolactate + CO2. It functions in the pathway amino-acid biosynthesis; L-isoleucine biosynthesis; L-isoleucine from 2-oxobutanoate: step 1/4. The protein operates within amino-acid biosynthesis; L-valine biosynthesis; L-valine from pyruvate: step 1/4. This chain is Acetolactate synthase small subunit (ilvH), found in Mycobacterium bovis (strain ATCC BAA-935 / AF2122/97).